Consider the following 143-residue polypeptide: Photosystem I reaction center subunit IV B, chloroplastic (143 aa).

The transit peptide at 1 to 51 (MASSSMASAASGFMVATPNIATSNTAPRTSMLFFSSSKNNTTTNFPRLVVR) directs the protein to the chloroplast. A compositionally biased stretch (low complexity) spans 56–75 (AAPPAATATAEGEAPPAKAA). The segment at 56–86 (AAPPAATATAEGEAPPAKAAKPPPIGPKRGT) is disordered.

It belongs to the PsaE family. In terms of processing, 2 isoforms exists (ratio 1:1). With or without the N-terminal alanine.

The protein localises to the plastid. It is found in the chloroplast thylakoid membrane. In terms of biological role, stabilizes the interaction between PsaC and the PSI core, assists the docking of the ferredoxin to PSI and interacts with ferredoxin-NADP oxidoreductase. This Nicotiana sylvestris (Wood tobacco) protein is Photosystem I reaction center subunit IV B, chloroplastic (PSAEB).